We begin with the raw amino-acid sequence, 690 residues long: Protein SPT2 homolog (690 aa).

Residues 1-579 (MDFHNILVMA…PGHRPVFRPQ (579 aa)) are important for interaction with DNA. Residues 40-82 (ESAAVQAFLRRKEEEKRKKELEEKRKKERLLAKRIELKHDRKA) adopt a coiled-coil conformation. Disordered regions lie at residues 105 to 167 (PKKR…APAP) and 186 to 619 (EIKV…QEEI). Residues 186–228 (EIKVVKKIEERPRTAEELREREYLERKNKRVETQKKKSEKEVK) are compositionally biased toward basic and acidic residues. Residues 229–243 (SAGISSSSKKATSLK) are compositionally biased toward low complexity. Composition is skewed to basic and acidic residues over residues 244-259 (ECAD…DKHA) and 271-285 (TDKK…EKHS). Polar residues predominate over residues 369–380 (HETNSSAKRPSS). The segment covering 383-396 (GKGGSGHPAGGSSA) has biased composition (gly residues). Low complexity predominate over residues 397-442 (GPGRSSSNSGTGPGRPGSVSSPGPGRQGSSSAAGPGRPSSSSSLGP). 3 stretches are compositionally biased toward gly residues: residues 443 to 457 (GRLG…GRPG), 465 to 477 (GRPG…GPGR), and 489 to 521 (LGSG…GPGR). The segment covering 545–565 (VSETISSKNLVTRPSNGQING) has biased composition (polar residues). The interval 580–690 (GIGRPPVGYK…KRQSKKLRTR (111 aa)) is important for interaction with histones. Residues 593 to 617 (DDDDDDDEYDSEMDDFIEDEGEPQE) show a composition bias toward acidic residues. Residues 650 to 690 (REQQKEEARSLRLGVQEDLEELRREEEELKRKRQSKKLRTR) adopt a coiled-coil conformation.

It belongs to the SPT2 family. As to quaternary structure, interacts with POLR1A. Interacts with histones. Interacts with a heterotetrameric complex formed by histone H3 and H4, especially when the histone tetramer is not bound to DNA.

It localises to the nucleus. The protein localises to the nucleolus. In terms of biological role, histone chaperone that stabilizes pre-existing histone tetramers and regulates replication-independent histone exchange on chromatin. Required for normal chromatin refolding in the coding region of transcribed genes, and for the suppression of spurious transcription. Binds DNA and histones and promotes nucleosome assembly (in vitro). Modulates RNA polymerase 1-mediated transcription. Required for optimal growth in the presence of the DNA damaging agents actinomycin D or mitomycin C (in vitro). Facilitates formation of tetrameric histone complexes containing histone H3 and H4. Modulates RNA polymerase 1-mediated transcription. Binds DNA, with a preference for branched DNA species, such as Y-form DNA and Holliday junction DNA. The polypeptide is Protein SPT2 homolog (SPTY2D1) (Gallus gallus (Chicken)).